A 610-amino-acid polypeptide reads, in one-letter code: Glutamine--fructose-6-phosphate aminotransferase [isomerizing] (610 aa).

C2 functions as the Nucleophile; for GATase activity in the catalytic mechanism. The 219-residue stretch at 2 to 220 (CGIISAISKK…EGDIAILSHK (219 aa)) folds into the Glutamine amidotransferase type-2 domain. SIS domains are found at residues 289-429 (AHAL…LKTN) and 461-600 (LAKE…IDKP). The For Fru-6P isomerization activity role is filled by K605.

In terms of assembly, homodimer.

The protein resides in the cytoplasm. The catalysed reaction is D-fructose 6-phosphate + L-glutamine = D-glucosamine 6-phosphate + L-glutamate. Its function is as follows. Catalyzes the first step in hexosamine metabolism, converting fructose-6P into glucosamine-6P using glutamine as a nitrogen source. The chain is Glutamine--fructose-6-phosphate aminotransferase [isomerizing] from Buchnera aphidicola subsp. Baizongia pistaciae (strain Bp).